The chain runs to 746 residues: Taurocyamine kinase (746 aa).

Approximate repeat units lie at residues 31-393 (MQVE…PEGV) and 394-705 (MPVE…YGEH). Residues 35–116 (SLQNLQAKIR…FDAVIADYHK (82 aa)) form the Phosphagen kinase N-terminal 1 domain. Positions 146-382 (LVVSTRVRLG…RALLELEVML (237 aa)) constitute a Phosphagen kinase C-terminal 1 domain. Residues 149-153 (STRVR), His212, and Arg256 each bind ATP. Residue Cys298 is part of the active site. Residues 307-311 (RASVH) and 335-340 (RGTHGE) each bind ATP. In terms of domain architecture, Phosphagen kinase N-terminal 2 spans 398 to 479 (PLTYLAKLLE…LDPLICDYHG (82 aa)). The region spanning 509–746 (FIVSTRVRVG…AKMIEIEKGL (238 aa)) is the Phosphagen kinase C-terminal 2 domain. Residues 512 to 516 (STRVR), His575, and Arg619 each bind ATP. Residue Cys661 is part of the active site. Residues 670–674 (RASVL) and 699–704 (RGLYGE) each bind ATP.

This sequence belongs to the ATP:guanido phosphotransferase family. The cofactor is Mg(2+).

The enzyme catalyses taurocyamine + ATP = N-phosphotaurocyamine + ADP + H(+). Its function is as follows. This family of enzymes reversibly catalyzes the transfer of phosphate between ATP and various phosphogens (e.g. creatine phosphate). The protein is Taurocyamine kinase of Schistosoma mansoni (Blood fluke).